Here is a 310-residue protein sequence, read N- to C-terminus: Cell division protein FtsQ (310 aa).

A disordered region spans residues 1 to 57 (MSEPENTAEDKDAEAAISADAVESETTADGGENPAEGESAEGPRMRARRERMERREA). At 1–95 (MSEPENTAED…AGRGKVQGLQ (95 aa)) the chain is on the cytoplasmic side. Residues 96 to 116 (TLLLVVLLALIAVGLGSILYF) traverse the membrane as a helical segment. At 117–310 (TPLMSVRQTV…VSSPDLPTVK (194 aa)) the chain is on the extracellular side. Residues 120–188 (MSVRQTVVTG…STLRVTIVER (69 aa)) enclose the POTRA domain.

It belongs to the FtsQ/DivIB family. FtsQ subfamily.

It localises to the cell membrane. Its function is as follows. Essential cell division protein. The protein is Cell division protein FtsQ of Mycobacteroides abscessus (strain ATCC 19977 / DSM 44196 / CCUG 20993 / CIP 104536 / JCM 13569 / NCTC 13031 / TMC 1543 / L948) (Mycobacterium abscessus).